A 390-amino-acid polypeptide reads, in one-letter code: Putative MSV199 domain-containing protein 211L (390 aa).

Residues 181-263 adopt a coiled-coil conformation; sequence HDRKAQEEKE…FDLSDVRDRL (83 aa).

This chain is Putative MSV199 domain-containing protein 211L, found in Acheta domesticus (House cricket).